Consider the following 260-residue polypeptide: Manganese transport system ATP-binding protein MntA (260 aa).

In terms of domain architecture, ABC transporter spans 10 to 245 (ISVDGVSVTY…NLELTFGGLP (236 aa)). 43–50 (GPNGSGKS) lines the ATP pocket.

Belongs to the ABC transporter superfamily.

Part of an ATP-driven transport system for manganese. The protein is Manganese transport system ATP-binding protein MntA (mntA) of Synechocystis sp. (strain ATCC 27184 / PCC 6803 / Kazusa).